A 348-amino-acid chain; its full sequence is A-type ATP synthase subunit C (348 aa).

This sequence belongs to the V-ATPase V0D/AC39 subunit family. As to quaternary structure, has multiple subunits with at least A(3), B(3), C, D, E, F, H, I and proteolipid K(x).

It is found in the cell membrane. Its function is as follows. Component of the A-type ATP synthase that produces ATP from ADP in the presence of a proton gradient across the membrane. This is A-type ATP synthase subunit C from Haloferax volcanii (strain ATCC 29605 / DSM 3757 / JCM 8879 / NBRC 14742 / NCIMB 2012 / VKM B-1768 / DS2) (Halobacterium volcanii).